The chain runs to 270 residues: Acetyl-coenzyme A carboxylase carboxyl transferase subunit beta (270 aa).

The region spanning 16 to 270 (LFAKCPACKH…KLLAFHGGSK (255 aa)) is the CoA carboxyltransferase N-terminal domain. The Zn(2+) site is built by Cys-20, Cys-23, Cys-38, and Cys-41. The C4-type zinc-finger motif lies at 20–41 (CPACKHMIYQKDLGLEKICPKC).

Belongs to the AccD/PCCB family. Acetyl-CoA carboxylase is a heterohexamer composed of biotin carboxyl carrier protein (AccB), biotin carboxylase (AccC) and two subunits each of ACCase subunit alpha (AccA) and ACCase subunit beta (AccD). Requires Zn(2+) as cofactor.

The protein resides in the cytoplasm. The catalysed reaction is N(6)-carboxybiotinyl-L-lysyl-[protein] + acetyl-CoA = N(6)-biotinyl-L-lysyl-[protein] + malonyl-CoA. Its pathway is lipid metabolism; malonyl-CoA biosynthesis; malonyl-CoA from acetyl-CoA: step 1/1. Functionally, component of the acetyl coenzyme A carboxylase (ACC) complex. Biotin carboxylase (BC) catalyzes the carboxylation of biotin on its carrier protein (BCCP) and then the CO(2) group is transferred by the transcarboxylase to acetyl-CoA to form malonyl-CoA. The polypeptide is Acetyl-coenzyme A carboxylase carboxyl transferase subunit beta (Streptococcus mutans serotype c (strain NN2025)).